The primary structure comprises 656 residues: Replication protein A 70 kDa DNA-binding subunit A (656 aa).

Positions 225-307 (AIKARVTAKG…NHLNNEWEIL (83 aa)) form a DNA-binding region, OB. The segment at 516–542 (CPNMIGDRQCNKKVTKSTNGNWTCDKC) adopts a C4-type zinc-finger fold.

This sequence belongs to the replication factor A protein 1 family. As to quaternary structure, heterotrimer of RPA1, RPA2 and RPA3 (canonical replication protein A complex). Interacts with RPA2B. Expressed in root tips, roots, shoot apical meristem (SAM), young leaves, flag leaves and ears, and at lower levels in mature leaves.

The protein localises to the nucleus. Its function is as follows. Component of the replication protein A complex (RPA) required for DNA recombination, repair and replication. The activity of RPA is mediated by single-stranded DNA binding and protein interactions. Plays an essential role in meiotic and somatic DNA repair, but is dispensable for DNA replication and homologous recombination. Is essential for normal progression through meiosis in pollen mother cells. Is involved in repair of double-strand DNA breaks (DSBs) induced by genotoxic stresses. This is Replication protein A 70 kDa DNA-binding subunit A (RPA1A) from Oryza sativa subsp. japonica (Rice).